A 431-amino-acid polypeptide reads, in one-letter code: Glutamate-1-semialdehyde 2,1-aminomutase (431 aa).

Residue K269 is modified to N6-(pyridoxal phosphate)lysine.

This sequence belongs to the class-III pyridoxal-phosphate-dependent aminotransferase family. HemL subfamily. In terms of assembly, homodimer. Pyridoxal 5'-phosphate is required as a cofactor.

It localises to the cytoplasm. It catalyses the reaction (S)-4-amino-5-oxopentanoate = 5-aminolevulinate. It participates in porphyrin-containing compound metabolism; protoporphyrin-IX biosynthesis; 5-aminolevulinate from L-glutamyl-tRNA(Glu): step 2/2. It functions in the pathway porphyrin-containing compound metabolism; chlorophyll biosynthesis. This is Glutamate-1-semialdehyde 2,1-aminomutase from Chlorobium limicola (strain DSM 245 / NBRC 103803 / 6330).